The chain runs to 355 residues: Chemerin-like receptor 2 (355 aa).

Residues Met-1–Ser-41 lie on the Extracellular side of the membrane. An N-linked (GlcNAc...) asparagine glycan is attached at Asn-14. A helical transmembrane segment spans residues Leu-42 to Phe-62. Topologically, residues Thr-63 to Thr-73 are cytoplasmic. Residues Leu-74 to Ile-94 traverse the membrane as a helical segment. Over Ser-95–Ala-112 the chain is Extracellular. Cys-110 and Cys-187 form a disulfide bridge. The chain crosses the membrane as a helical span at residues Asn-113 to Leu-133. The Cytoplasmic portion of the chain corresponds to Asp-134–Ser-154. The chain crosses the membrane as a helical span at residues Leu-155–Phe-175. The Extracellular portion of the chain corresponds to Arg-176–Lys-210. A helical transmembrane segment spans residues Phe-211–Phe-231. The Cytoplasmic portion of the chain corresponds to Lys-232–Thr-247. The chain crosses the membrane as a helical span at residues Ile-248 to Trp-268. Residues Glu-269–Ile-286 are Extracellular-facing. A helical transmembrane segment spans residues Pro-287–Ile-307. Over Ser-308–Gln-355 the chain is Cytoplasmic.

The protein belongs to the chemokine-like receptor (CMKLR) family.

The protein localises to the cell membrane. Functionally, receptor for chemoattractant adipokine chemerin/RARRES2 suggesting a role for this receptor in the regulation of inflammation and energy homesotasis. Signals mainly via beta-arrestin pathway. Binding of RARRES2 activates weakly G proteins, calcium mobilization and MAPK1/MAPK3 (ERK1/2) phosphorylation too. Acts also as a receptor for TAFA1, mediates its effects on neuronal stem-cell proliferation and differentiation via the activation of ROCK/ERK and ROCK/STAT3 signaling pathway. The chain is Chemerin-like receptor 2 (CMKLR2) from Macaca mulatta (Rhesus macaque).